The following is a 252-amino-acid chain: Thiazole synthase (252 aa).

Lysine 98 serves as the catalytic Schiff-base intermediate with DXP. 1-deoxy-D-xylulose 5-phosphate is bound by residues glycine 159, 185–186, and 207–208; these read AG and AT.

Belongs to the ThiG family. As to quaternary structure, homotetramer. Forms heterodimers with either ThiH or ThiS.

The protein localises to the cytoplasm. The enzyme catalyses [ThiS sulfur-carrier protein]-C-terminal-Gly-aminoethanethioate + 2-iminoacetate + 1-deoxy-D-xylulose 5-phosphate = [ThiS sulfur-carrier protein]-C-terminal Gly-Gly + 2-[(2R,5Z)-2-carboxy-4-methylthiazol-5(2H)-ylidene]ethyl phosphate + 2 H2O + H(+). It participates in cofactor biosynthesis; thiamine diphosphate biosynthesis. Catalyzes the rearrangement of 1-deoxy-D-xylulose 5-phosphate (DXP) to produce the thiazole phosphate moiety of thiamine. Sulfur is provided by the thiocarboxylate moiety of the carrier protein ThiS. In vitro, sulfur can be provided by H(2)S. In Mycobacterium avium (strain 104), this protein is Thiazole synthase.